Consider the following 355-residue polypeptide: Ion-translocating oxidoreductase complex subunit D (355 aa).

5 helical membrane-spanning segments follow: residues 13–33 (GKLTARIMLWVIFGMLPALAV), 35–55 (VYYFGFGVLIQICLAVALALI), 77–97 (VILTALILAMAIPPYAPYWVI), 98–118 (LIGTFCAVILGKHVYGGLGQN), and 128–148 (VVLLISFPVQMTGWMPPISLL). Thr186 carries the post-translational modification FMN phosphoryl threonine. Helical transmembrane passes span 216–236 (AGLGWLQVNLAFFIGGLFLIW), 245–265 (PVAILLSLGIFCGLFDLFGNA), 267–287 (AVGFFAQLFSGAMMFGAFFIA), 294–314 (PVTPKGKWVFGILIGLLICLI), and 318–338 (GNYPDGVAFAVLLANICVPLI).

Belongs to the NqrB/RnfD family. The complex is composed of six subunits: RnfA, RnfB, RnfC, RnfD, RnfE and RnfG. FMN is required as a cofactor.

It localises to the cell inner membrane. Functionally, part of a membrane-bound complex that couples electron transfer with translocation of ions across the membrane. In Actinobacillus succinogenes (strain ATCC 55618 / DSM 22257 / CCUG 43843 / 130Z), this protein is Ion-translocating oxidoreductase complex subunit D.